A 705-amino-acid polypeptide reads, in one-letter code: Translation initiation factor IF-2 (705 aa).

Positions 40 to 124 are disordered; the sequence is DDQIKALDKK…QPAAPKEIPS (85 aa). A compositionally biased stretch (basic and acidic residues) spans 41–58; sequence DQIKALDKKFKKEQKNDN. Residues 59-77 show a composition bias toward low complexity; that stretch reads KQSTQNNHQKSNNQNQNKG. Residues 94 to 108 show a composition bias toward basic residues; that stretch reads KGNKKNNRNNKKNNK. A tr-type G domain is found at 207-376; it reads ERPAVVTIMG…GLVAEVQELK (170 aa). The segment at 216–223 is G1; the sequence is GHVDHGKT. 216–223 serves as a coordination point for GTP; it reads GHVDHGKT. Residues 241-245 form a G2 region; it reads GITQH. The tract at residues 262–265 is G3; sequence DTPG. GTP is bound by residues 262-266 and 316-319; these read DTPGH and NKID. The interval 316–319 is G4; the sequence is NKID. A G5 region spans residues 352–354; sequence SAL.

It belongs to the TRAFAC class translation factor GTPase superfamily. Classic translation factor GTPase family. IF-2 subfamily.

It localises to the cytoplasm. One of the essential components for the initiation of protein synthesis. Protects formylmethionyl-tRNA from spontaneous hydrolysis and promotes its binding to the 30S ribosomal subunits. Also involved in the hydrolysis of GTP during the formation of the 70S ribosomal complex. In Staphylococcus aureus (strain MSSA476), this protein is Translation initiation factor IF-2.